The following is a 572-amino-acid chain: Glutamate--tRNA ligase (572 aa).

The short motif at 112–122 is the 'HIGH' region element; sequence PNPNGPPSLGN.

It belongs to the class-I aminoacyl-tRNA synthetase family. Glutamate--tRNA ligase type 2 subfamily.

The protein localises to the cytoplasm. The enzyme catalyses tRNA(Glu) + L-glutamate + ATP = L-glutamyl-tRNA(Glu) + AMP + diphosphate. Functionally, catalyzes the attachment of glutamate to tRNA(Glu) in a two-step reaction: glutamate is first activated by ATP to form Glu-AMP and then transferred to the acceptor end of tRNA(Glu). The sequence is that of Glutamate--tRNA ligase from Methanocella arvoryzae (strain DSM 22066 / NBRC 105507 / MRE50).